We begin with the raw amino-acid sequence, 203 residues long: Mediator of RNA polymerase II transcription subunit 22 (203 aa).

The stretch at 93 to 123 (SVNEAINQRNQQLRSLQEECDKKLIALRDEI) forms a coiled coil. The span at 164–188 (ESLSMPLTTATAEQSIATSQSSTPS) shows a compositional bias: polar residues. Residues 164 to 203 (ESLSMPLTTATAEQSIATSQSSTPSHPHVNGHGAGPTDHS) are disordered.

This sequence belongs to the Mediator complex subunit 22 family. Component of the Mediator complex.

The protein localises to the nucleus. Its function is as follows. Component of the Mediator complex, a coactivator involved in the regulated transcription of nearly all RNA polymerase II-dependent genes. Mediator functions as a bridge to convey information from gene-specific regulatory proteins to the basal RNA polymerase II transcription machinery. Mediator is recruited to promoters by direct interactions with regulatory proteins and serves as a scaffold for the assembly of a functional preinitiation complex with RNA polymerase II and the general transcription factors. In Gallus gallus (Chicken), this protein is Mediator of RNA polymerase II transcription subunit 22 (MED22).